We begin with the raw amino-acid sequence, 274 residues long: Large ribosomal subunit protein uL2 (274 aa).

The disordered stretch occupies residues 220–265; that stretch reads VRGAAMNPRDHPHGGGEGRAPRGMSTPKTKWGKPARGVKTRHNPRF. The segment covering 227 to 239 has biased composition (basic and acidic residues); sequence PRDHPHGGGEGRA. Residues 249 to 262 are compositionally biased toward basic residues; that stretch reads KWGKPARGVKTRHN.

This sequence belongs to the universal ribosomal protein uL2 family. As to quaternary structure, part of the 50S ribosomal subunit. Forms a bridge to the 30S subunit in the 70S ribosome.

Functionally, one of the primary rRNA binding proteins. Required for association of the 30S and 50S subunits to form the 70S ribosome, for tRNA binding and peptide bond formation. It has been suggested to have peptidyltransferase activity; this is somewhat controversial. Makes several contacts with the 16S rRNA in the 70S ribosome. The protein is Large ribosomal subunit protein uL2 of Chloroflexus aurantiacus (strain ATCC 29364 / DSM 637 / Y-400-fl).